A 99-amino-acid chain; its full sequence is Transposase InsE for insertion sequence IS3A (99 aa).

The interval 1–21 (MTKTVSTSKKPRKQHSPEFRS) is disordered.

It belongs to the transposase 8 family.

Its function is as follows. Involved in the transposition of the insertion sequence IS3. This chain is Transposase InsE for insertion sequence IS3A (insE1), found in Escherichia coli (strain K12).